We begin with the raw amino-acid sequence, 208 residues long: Sec-independent protein translocase protein TatB (208 aa).

Residues 1-21 form a helical membrane-spanning segment; that stretch reads MFDIGVGELTLIAVVALVVLG. Positions 188–208 are disordered; sequence DAGTPAASMPSAPAKIQEKQP.

Belongs to the TatB family. The Tat system comprises two distinct complexes: a TatABC complex, containing multiple copies of TatA, TatB and TatC subunits, and a separate TatA complex, containing only TatA subunits. Substrates initially bind to the TatABC complex, which probably triggers association of the separate TatA complex to form the active translocon.

It is found in the cell inner membrane. Its function is as follows. Part of the twin-arginine translocation (Tat) system that transports large folded proteins containing a characteristic twin-arginine motif in their signal peptide across membranes. Together with TatC, TatB is part of a receptor directly interacting with Tat signal peptides. TatB may form an oligomeric binding site that transiently accommodates folded Tat precursor proteins before their translocation. This chain is Sec-independent protein translocase protein TatB, found in Xanthomonas axonopodis pv. citri (strain 306).